We begin with the raw amino-acid sequence, 232 residues long: Large ribosomal subunit protein uL1 (232 aa).

It belongs to the universal ribosomal protein uL1 family. As to quaternary structure, part of the 50S ribosomal subunit.

In terms of biological role, binds directly to 23S rRNA. The L1 stalk is quite mobile in the ribosome, and is involved in E site tRNA release. Its function is as follows. Protein L1 is also a translational repressor protein, it controls the translation of the L11 operon by binding to its mRNA. The polypeptide is Large ribosomal subunit protein uL1 (Dinoroseobacter shibae (strain DSM 16493 / NCIMB 14021 / DFL 12)).